The chain runs to 220 residues: MAATSSSPPCNISASSLLLRQPSRSILKVFGLLPPVSRNNRKLGRLTVTRSNLAQDFLGDFGARDPYPEEIASQFGDKVLGCQSTEHKILIPNASVLSLSQLQCSPVSSSQPPLSGDDARTLLHKVLGWSIVDNEAGGLKIRCMWKVRDFGCGVELINRIHKVAEASGHYPSLHLESPTQVRAELFTSSIGGLSMNDFIMAAKIDDIKTSDLSPRKRAWA.

The N-terminal 50 residues, 1–50 (MAATSSSPPCNISASSLLLRQPSRSILKVFGLLPPVSRNNRKLGRLTVTR), are a transit peptide targeting the chloroplast.

It belongs to the pterin-4-alpha-carbinolamine dehydratase family. Interacts with SDIR1. Interacts with AIRP2. In terms of processing, ubiquitinated by SDIR1. Ubiquitination leads to its subsequent degradation, thus controlling abscisic acid (ABA) signaling. Ubiquitinated by AIRP2. Ubiquitination leads to its subsequent degradation, thus controlling abscisic acid (ABA) signaling during drought stress.

The protein resides in the plastid. Its subcellular location is the chloroplast. The protein localises to the cell membrane. It is found in the nucleus. It carries out the reaction (4aS,6R)-4a-hydroxy-L-erythro-5,6,7,8-tetrahydrobiopterin = (6R)-L-erythro-6,7-dihydrobiopterin + H2O. In terms of biological role, involved in tetrahydrobiopterin biosynthesis. Interacts with and acts downstream of the E3 ubiquitin-protein ligase SDIR1 in abscisic acid (ABA) and salt stress signaling. Regulates the expression of the bZIP transcription factor ABI5, which mediates responses to ABA during seed germination and salt stress. The SDIR1-ATP1/SDIRIP1 complex plays an important role in ABA signaling through the ubiquitination pathway. Acts downstream of AIRP2 in regulation of ABA signaling during drought stress. The polypeptide is Probable pterin-4-alpha-carbinolamine dehydratase, chloroplastic (Arabidopsis thaliana (Mouse-ear cress)).